The following is a 151-amino-acid chain: Ribosome maturation factor RimP (151 aa).

The protein belongs to the RimP family.

It is found in the cytoplasm. In terms of biological role, required for maturation of 30S ribosomal subunits. This is Ribosome maturation factor RimP from Caldicellulosiruptor saccharolyticus (strain ATCC 43494 / DSM 8903 / Tp8T 6331).